Reading from the N-terminus, the 449-residue chain is Heterogeneous nuclear ribonucleoprotein H2 (449 aa).

Met1 bears the N-acetylmethionine mark. The residue at position 2 (Met2) is an N-acetylmethionine; in Heterogeneous nuclear ribonucleoprotein H2, N-terminally processed. Residues Phe11–Ser90 form the RRM 1 domain. Position 23 is a phosphoserine (Ser23). A Glycyl lysine isopeptide (Lys-Gly) (interchain with G-Cter in SUMO2) cross-link involves residue Lys35. Ser54 and Ser63 each carry phosphoserine. A Glycyl lysine isopeptide (Lys-Gly) (interchain with G-Cter in SUMO2) cross-link involves residue Lys87. Ser90 is subject to Phosphoserine. A Glycyl lysine isopeptide (Lys-Gly) (interchain with G-Cter in SUMO2) cross-link involves residue Lys98. Positions Gly111–Arg188 constitute an RRM 2 domain. At Arg233 the chain carries Dimethylated arginine; alternate. Arg233 carries the post-translational modification Omega-N-methylarginine; alternate. The 1-1 repeat unit spans residues Gly234–Tyr249. Positions Gly234–Tyr433 are 2 X 16 AA Gly-rich approximate repeats. Tyr246 bears the Phosphotyrosine mark. Residues His289–Thr364 form the RRM 3 domain. Phosphoserine is present on Ser310. 3 tandem repeats follow at residues His354 to Tyr372, His374 to Tyr392, and Gly418 to Tyr433. The 2 X 19 AA perfect repeats stretch occupies residues His354–Tyr392.

In terms of assembly, component of a ribonucleoprotein complex containing mRNAs and RNA-binding proteins including DDX5, HNRNPH2 and SRSF1 as well as splicing regulator ARVCF. Interacts with TXNL4/DIM1.

Its subcellular location is the nucleus. It is found in the nucleoplasm. This protein is a component of the heterogeneous nuclear ribonucleoprotein (hnRNP) complexes which provide the substrate for the processing events that pre-mRNAs undergo before becoming functional, translatable mRNAs in the cytoplasm. Binds poly(RG). The protein is Heterogeneous nuclear ribonucleoprotein H2 (Hnrnph2) of Mus musculus (Mouse).